Here is a 518-residue protein sequence, read N- to C-terminus: Wax ester synthase/diacylglycerol acyltransferase 6 (518 aa).

Positions 1–17 (MEIKTRRDTSETSVRKD) are enriched in basic and acidic residues. A disordered region spans residues 1–29 (MEIKTRRDTSETSVRKDDEEEVEEEQPLS). At 1 to 213 (MEIKTRRDTS…LMAGSRGDSR (213 aa)) the chain is on the cytoplasmic side. The active-site Proton acceptor is the His163. Residues 185-205 (PDELPSLPNQNRSSSRSSRLM) are disordered. A helical transmembrane segment spans residues 214–234 (FLWLVMVIWSAIMLVLNTVCD). Residues 235-518 (ALEFIATTMF…VQERDSRSLD (284 aa)) lie on the Lumenal side of the membrane. Residue Asn430 is glycosylated (N-linked (GlcNAc...) asparagine).

It in the N-terminal section; belongs to the long-chain O-acyltransferase family. In terms of tissue distribution, expressed in roots, stems, leaves, flowers and siliques.

It is found in the cell membrane. The protein localises to the endoplasmic reticulum membrane. It localises to the golgi apparatus membrane. The enzyme catalyses an acyl-CoA + a 1,2-diacyl-sn-glycerol = a triacyl-sn-glycerol + CoA. The catalysed reaction is a long chain fatty alcohol + a fatty acyl-CoA = a wax ester + CoA. It functions in the pathway glycerolipid metabolism; triacylglycerol biosynthesis. Its pathway is lipid metabolism. Bifunctional wax ester synthase/diacylglycerol acyltransferase that uses acyl-CoAs with 16, 18 and 20 carbons as substrates, preferably in combination with 16:0ol alcohol. Involved in cuticular wax biosynthesis. This is Wax ester synthase/diacylglycerol acyltransferase 6 from Arabidopsis thaliana (Mouse-ear cress).